We begin with the raw amino-acid sequence, 150 residues long: MRCPYCTGESAVIDTRELDNGETIRRRRRCKHCDRRFTTYERVESVNVMVVKKNGDREPYDREKLLRGLRVAAYKRPISADVIDTLVTEVEAALIAYDALEVPSSVIGEQVMERLRSLDEVAYIRFASVYRSFSDLGKLREAVEELMEKE.

Residues 3-33 (CPYCTGESAVIDTRELDNGETIRRRRRCKHC) fold into a zinc finger. Positions 48–138 (VMVVKKNGDR…VYRSFSDLGK (91 aa)) constitute an ATP-cone domain.

It belongs to the NrdR family. It depends on Zn(2+) as a cofactor.

Negatively regulates transcription of bacterial ribonucleotide reductase nrd genes and operons by binding to NrdR-boxes. This Herpetosiphon aurantiacus (strain ATCC 23779 / DSM 785 / 114-95) protein is Transcriptional repressor NrdR.